The primary structure comprises 483 residues: Docking protein 1 (483 aa).

Met1 carries the N-acetylmethionine modification. Residues 4–119 form the PH domain; the sequence is AVMEGPLFLQ…WVQTLCQNAF (116 aa). Phosphoserine is present on Ser48. The region spanning 151-259 is the IRS-type PTB domain; that stretch reads EGSQFWVTVQ…HRQKIQGKAG (109 aa). Phosphoserine is present on residues Ser269 and Ser291. Residues 293–326 form a disordered region; sequence PALYSEPLDSLRIPPGPSQDSLYSDPLDSTPARA. A phosphotyrosine mark is found at Tyr296, Tyr337, Tyr362, Tyr377, Tyr398, and Tyr409. The interval 409–483 is disordered; the sequence is YAVPPPRSTK…RTGAKSEGST (75 aa). Residues 411–424 are compositionally biased toward pro residues; the sequence is VPPPRSTKPFPAPK. Phosphoserine is present on Ser416. Over residues 434–460 the composition is skewed to polar residues; sequence GAATGSGSQGHSSDTALYSQVQKSGAS. Phosphotyrosine is present on Tyr451. A Phosphoserine modification is found at Ser462.

Belongs to the DOK family. Type A subfamily. Interacts with RasGAP, INPP5D/SHIP1 and ABL1. Interacts directly with phosphorylated ITGB3. Interacts with SRMS (via the SH2 and SH3 domains). In terms of processing, constitutively tyrosine-phosphorylated. Phosphorylated by TEC. Phosphorylated by LYN. Phosphorylated on tyrosine residues by the insulin receptor kinase. Results in the negative regulation of the insulin signaling pathway. Phosphorylated on tyrosine residues by SRMS.

It is found in the cytoplasm. It localises to the nucleus. Functionally, DOK proteins are enzymatically inert adaptor or scaffolding proteins. They provide a docking platform for the assembly of multimolecular signaling complexes. DOK1 appears to be a negative regulator of the insulin signaling pathway. Modulates integrin activation by competing with talin for the same binding site on ITGB3. The polypeptide is Docking protein 1 (DOK1) (Bos taurus (Bovine)).